A 372-amino-acid chain; its full sequence is Probable butyrate kinase (372 aa).

It belongs to the acetokinase family.

The protein localises to the cytoplasm. It carries out the reaction butanoate + ATP = butanoyl phosphate + ADP. In Oleidesulfovibrio alaskensis (strain ATCC BAA-1058 / DSM 17464 / G20) (Desulfovibrio alaskensis), this protein is Probable butyrate kinase.